Reading from the N-terminus, the 507-residue chain is Maturase K (507 aa).

The protein belongs to the intron maturase 2 family. MatK subfamily.

Its subcellular location is the plastid. The protein resides in the chloroplast. Usually encoded in the trnK tRNA gene intron. Probably assists in splicing its own and other chloroplast group II introns. The chain is Maturase K from Ranunculus repens (Creeping buttercup).